The primary structure comprises 242 residues: Pyr4-family terpene cyclase mfmH (242 aa).

4 helical membrane passes run valine 25–isoleucine 45, glycine 55–isoleucine 75, alanine 80–tryptophan 100, and asparagine 116–leucine 136. Asparagine 170 is a glycosylation site (N-linked (GlcNAc...) asparagine). Helical transmembrane passes span serine 175–tryptophan 195 and valine 211–alanine 231.

Belongs to the paxB family.

It is found in the membrane. It functions in the pathway secondary metabolite biosynthesis; terpenoid biosynthesis. Functionally, terpene cyclase; part of the gene cluster that mediates the biosynthesis of the phthalide-terpenoid hybrid 11'-O-desmethylfendlerol. Within the pathway, mfmH catalyzes the last step and cyclizes the prenyl unit of 5-O-farnesylcyclopolic acid into a drimane-like structure to yield 11'-O-desmethylfendlerol. The biosynthesis of 11'-O-desmethylfendlerol begins with the NR-PKS mfmB that forms 3,5-dimethylorsellinic acid (DMOA), which is then transformed into the phthalide 5,7-dihydroxy-4-(hydroxymethyl)-6-methylphthalide by the cytochrome P450 monooxygenase mfmA and the hydrolase mfmC. Subsequently, the methyltransferase mfmE catalyzes 7-O-methylation to yield 5-hydroxy-4-(hydroxymethyl)-7-methoxy-6-methylphthalide, which undergoes C-3 hydroxylation by the cytochrome P450 monooxygenase mfmF. The resultant cyclopolic acid (2,5-dihydroxy-4-(hydroxymethyl)-7-methoxy-6-methylphthalide) is then farnesylated by the DMATS-type prenyltransferase mfmD to afford 5-O-farnesylcyclopolic acid. Finally, the Pyr4-family terpene cyclase mfmH cyclizes the farnesyl moiety of 5-O-farnesylcyclopolic acid into a drimane-like structure, thus completing the biosynthesis of 11'-O-desmethylfendlerol. The polypeptide is Pyr4-family terpene cyclase mfmH (Annulohypoxylon moriforme (Filamentous fungus)).